The primary structure comprises 222 residues: Thiopurine S-methyltransferase (222 aa).

Residues Trp-10, Leu-45, Glu-66, and Arg-126 each contribute to the S-adenosyl-L-methionine site.

The protein belongs to the class I-like SAM-binding methyltransferase superfamily. TPMT family.

Its subcellular location is the cytoplasm. The enzyme catalyses S-adenosyl-L-methionine + a thiopurine = S-adenosyl-L-homocysteine + a thiopurine S-methylether.. This is Thiopurine S-methyltransferase from Shewanella piezotolerans (strain WP3 / JCM 13877).